Reading from the N-terminus, the 302-residue chain is Protein TILLER ANGLE CONTROL 1 (302 aa).

An IGT motif motif is present at residues 57–63; that stretch reads GILTIGT. Disordered regions lie at residues 82–115 and 159–180; these read ESEEDDQESHGFSHSGNDDDDDDDEHYDHSVEDE and EGSSEISTKPDQSANDQSKNKK. Positions 99-115 are enriched in acidic residues; it reads DDDDDDDEHYDHSVEDE. Residues 162–175 are compositionally biased toward polar residues; the sequence is SEISTKPDQSANDQ.

The protein belongs to the TAC family. Highly expressed in flower buds. Expressed in branch attachment sites, vegetative buds and young fruits.

Its function is as follows. Involved in the regulation of axillary shoot growth angle. Promotes horizontal shoot growth. In Prunus persica (Peach), this protein is Protein TILLER ANGLE CONTROL 1.